Consider the following 252-residue polypeptide: DNA-(apurinic or apyrimidinic site) lyase Nei2 (252 aa).

P2 acts as the Schiff-base intermediate with DNA in catalysis. Catalysis depends on E3, which acts as the Proton donor. K51 functions as the Proton donor (in beta-elimination) in the catalytic mechanism. Residues 216–250 (WVYGRAGEPCRRCGTLIQTDRGGERVTYWCPVCQT) form an FPG-type zinc finger. Residues C225, C228, C245, and C248 each contribute to the Zn(2+) site.

Belongs to the FPG family. As to quaternary structure, monomer. The cofactor is Zn(2+).

The catalysed reaction is 2'-deoxyribonucleotide-(2'-deoxyribose 5'-phosphate)-2'-deoxyribonucleotide-DNA = a 3'-end 2'-deoxyribonucleotide-(2,3-dehydro-2,3-deoxyribose 5'-phosphate)-DNA + a 5'-end 5'-phospho-2'-deoxyribonucleoside-DNA + H(+). In terms of biological role, involved in base excision repair of DNA damaged by oxidation or by mutagenic agents. Acts as DNA glycosylase that recognizes and removes damaged bases. Involved in the repair of psoralen-UVA DNA cross-links. A lyase that cleaves single-stranded (ss)DNA but not double-stranded (ds)DNA with an abasic site. Has 5-hydroxyuracil (5-OH-U) glycosylase activity on ssDNA with 5-OH-U, with 10-fold less activity on dsDNA, but weak to no uracil glycosylase activity. Has weak glycosylase activity on thymine glycol and dihydrothymine residues in ssDNA. Cleaves the DNA backbone by beta-delta elimination to generate a single-strand break at the site of the removed base with both 3'- and 5'-phosphates. This Mycolicibacterium smegmatis (strain ATCC 700084 / mc(2)155) (Mycobacterium smegmatis) protein is DNA-(apurinic or apyrimidinic site) lyase Nei2.